A 141-amino-acid polypeptide reads, in one-letter code: Lutropin subunit beta (141 aa).

A signal peptide spans 1–21; it reads MERYQELTVLLLLLLLEGGSG. Disulfide bonds link cysteine 30-cysteine 78, cysteine 44-cysteine 93, cysteine 47-cysteine 131, cysteine 55-cysteine 109, cysteine 59-cysteine 111, and cysteine 114-cysteine 121. A glycan (N-linked (GlcNAc...) asparagine) is linked at asparagine 34.

This sequence belongs to the glycoprotein hormones subunit beta family. In terms of assembly, heterodimer of a common alpha chain and a unique beta chain which confers biological specificity to thyrotropin, lutropin, follitropin and gonadotropin.

It is found in the secreted. Its function is as follows. Promotes spermatogenesis and ovulation by stimulating the testes and ovaries to synthesize steroids. This Monodelphis domestica (Gray short-tailed opossum) protein is Lutropin subunit beta (LHB).